A 1087-amino-acid chain; its full sequence is Synaptopodin-2 (1087 aa).

The 83-residue stretch at 6-88 folds into the PDZ domain; it reads FICISMTGGA…SLHLLVKRPS (83 aa). Disordered regions lie at residues 24–52, 88–112, and 207–272; these read GKEEQQPLQVAKIRSQSKASGSGLREGDE, SSGTSETLDSESETTNHQHLTHEGP, and GPIV…AGLP. Residues 101–112 are compositionally biased toward basic and acidic residues; that stretch reads TTNHQHLTHEGP. Composition is skewed to polar residues over residues 207–230 and 246–255; these read GPIVTLQGNDKSTSPDPDWSSQLE and TSLTSSTSSG. Residues S300, S319, and S320 each carry the phosphoserine modification. A disordered region spans residues 320-359; that stretch reads SEGTEHGEDQRSGKDQSRPHKHRARHARLRRSESLSEKQV. The segment covering 322–337 has biased composition (basic and acidic residues); it reads GTEHGEDQRSGKDQSR. T323 is modified (phosphothreonine). Residues 338–348 are compositionally biased toward basic residues; that stretch reads PHKHRARHARL. Basic and acidic residues predominate over residues 349–359; it reads RRSESLSEKQV. The Nuclear localization signal motif lies at 388-396; that stretch reads KKRRRRARK. 4 positions are modified to phosphoserine: S540, S541, S543, and S546. Residues 551–557 form an interaction with YWHAB region; sequence RSLASVP. At S555 the chain carries Phosphoserine; by PKA. Disordered stretches follow at residues 581–817 and 832–863; these read AKPF…ALNL and NYTPKPSAPTPLVNAAPAGAGGPSNELPGMSG. S596 carries the post-translational modification Phosphoserine. Positions 599 to 804 are interaction with YWHAB; sequence RSVTSPISDF…AVSSIKIAQP (206 aa). Position 602 is a phosphothreonine; by PKA and CaMK2 (T602). Phosphoserine is present on S603. Pro residues-rich tracts occupy residues 609–622 and 636–647; these read PAPPPYSAVSPPPE and AQPPPWPQPAPW. Residues 611 to 614 carry the PPPY motif motif; the sequence is PPPY. Y614 bears the Phosphotyrosine mark. A Phosphoserine modification is found at S618. Residues 656–796 form an F-actin binding region; it reads SEQIASRDER…PPNPPQVTAV (141 aa). Positions 656-909 are F-actin bundling activity; that stretch reads SEQIASRDER…LPASWKYSSN (254 aa). Interaction with ACTN2 stretches follow at residues 656-917 and 894-1087; these read SEQI…PPVA and QSPT…VVEE. Phosphoserine occurs at positions 697 and 719. Residues 740–893 are actin binding; the sequence is AKQKTPPPVA…DTVQAHTVRA (154 aa). T744 carries the post-translational modification Phosphothreonine. Low complexity predominate over residues 751 to 777; the sequence is KPAVKSPSSSQPVAPVSPVWSPGVAPA. Residues S767 and S771 each carry the phosphoserine modification. The span at 781–797 shows a compositional bias: polar residues; the sequence is AFSTSNPPNPPQVTAVS. The segment at 803–1087 is interaction with FLNC; that stretch reads QPAAPPARPA…QVWKPSVVEE (285 aa). 3 positions are modified to phosphoserine: S895, S899, and S903. Disordered regions lie at residues 930 to 952, 970 to 1012, and 1037 to 1060; these read AIKSQPPGAQASKTSKKKGKKPL, FTFQ…PTNA, and PVSASPVPVSVPTSPKQESTSTSY. The interval 993–1012 is interaction with ZYX; the sequence is PAMKQALPPRQANVGSPTNA. S1008 and S1050 each carry phosphoserine. A compositionally biased stretch (low complexity) spans 1037–1051; it reads PVSASPVPVSVPTSP.

This sequence belongs to the synaptopodin family. May self-associate in muscle cells under oxidative stress. Binds F-actin. Interacts with ACTN2; ACTN2 is proposed to anchor SYOP2 at Z lines in mature myocytes. Interacts with AKAP6, PPP3CA and CAMK2A. Interacts (phosphorylated form) with YWHAB; YWHAB competes with ACTN2 for interaction with SYNPO2. Interacts with KPNA2; mediating nuclear import of SYNOP2; dependent on interaction with YWHAB. Interacts with IPO13; may be implicated in SYNOP2 nuclear import. Interacts with ZYX, FLNC, ILK. Interacts with BAG3 (via WW 1 domain). May associate with the CASA complex consisting of HSPA8, HSPB8 and BAG3. Interacts with VPS18. Post-translationally, phosphorylated by PKA, and by CaMK2 at multiple sites. Dephosphorylated by calcineurin at Ser-555 and Thr-602; abrogating interaction with YWHAB and impairing nuclear import. In terms of tissue distribution, expressed in skeletal muscle, heart, colon, stomach, uterus and lung. Expression is restricted to muscle cell layers in colon, uterus and stomach.

It localises to the nucleus. Its subcellular location is the cytoplasm. The protein localises to the myofibril. It is found in the sarcomere. The protein resides in the z line. It localises to the cell junction. Its subcellular location is the focal adhesion. Functionally, has an actin-binding and actin-bundling activity. Can induce the formation of F-actin networks. At the sarcomeric Z lines is proposed to act as adapter protein that links nascent myofibers to the sarcolemma via ZYX and may play a role in early assembly and stabilization of the Z lines. Involved in autophagosome formation. May play a role in chaperone-assisted selective autophagy (CASA) involved in Z lines maintenance in striated muscle under mechanical tension; may link the client-processing CASA chaperone machinery to a membrane-tethering and fusion complex providing autophagosome membranes. Involved in regulation of cell migration. May be a tumor suppressor. The protein is Synaptopodin-2 (Synpo2) of Mus musculus (Mouse).